A 377-amino-acid chain; its full sequence is Apelin receptor (377 aa).

Residues 1-28 (MEDDGYNYYGADNQSECDYADWKPSGAL) are Extracellular-facing. An N-linked (GlcNAc...) asparagine glycan is attached at asparagine 13. Cystine bridges form between cysteine 17-cysteine 279 and cysteine 100-cysteine 179. Residues 29–52 (IPAIYMLVFLLGTTGNGLVLWTVF) traverse the membrane as a helical segment. Topologically, residues 53-62 (RTSREKRRSA) are cytoplasmic. A helical membrane pass occupies residues 63–84 (DIFIASLAVADLTFVVTLPLWA). The Extracellular portion of the chain corresponds to 85-97 (TYTYREFDWPFGT). A helical transmembrane segment spans residues 98–123 (FSCKLSSYLIFVNMYASVFCLTGLSF). Residues 124-144 (DRYLAIVRPVANARLRLRVSG) lie on the Cytoplasmic side of the membrane. Residues 145–162 (AVATAVLWVLAALLAVPV) traverse the membrane as a helical segment. At 163-196 (MVFRSTDASENGTKIQCYMDYSMVATSNSEWAWE) the chain is on the extracellular side. The N-linked (GlcNAc...) asparagine glycan is linked to asparagine 173. The chain crosses the membrane as a helical span at residues 197–221 (VGLGVSSTAVGFVVPFTIMLTCYFF). At 222-244 (IAQTIAGHFRKERIEGLRKRRRL) the chain is on the cytoplasmic side. Residues 245 to 268 (LSIIVVLVVTFALCWMPYHLVKTL) form a helical membrane-spanning segment. The Extracellular segment spans residues 269 to 287 (YMLGSLLHWPCDFDIFLMN). A helical transmembrane segment spans residues 288 to 310 (VFPYCTCISYVNSCLNPFLYAFF). Topologically, residues 311 to 377 (DPRFRQACTS…IPYSQETLVD (67 aa)) are cytoplasmic. Residues 334–377 (HSSSAEKSASYSSGHSQGPGPNMGKGGEQMHEKSIPYSQETLVD) form a disordered region. Residues 335–349 (SSSAEKSASYSSGHS) are compositionally biased toward low complexity.

It belongs to the G-protein coupled receptor 1 family. In terms of assembly, homodimer; dimerization inhibits APLNR-mediated G protein and beta-arrestin signaling pathways compared to monomeric APLNR. Expressed in coronary endothelial cells (at protein level). Expressed in the embryo, allantoic and endothelial precursor cells of the yolk sac at 8 days post-coitum (dpc). Expressed in the secondary heart field and somite at 8.25 dpc. Expressed in fetal allantoic endothelial cells at 9 dpc. Expressed in the allantoid and the invading fetal vasculature of the placenta at 9.5 dpc. Expressed in endothelial cells adjacent to syncytiotrophoblast cells at 10.5 dpc. Expressed weakly in the embryonic heart at 11.5 dpc. Expressed in the adult heart. Expressed in endothelial cells and cardiomyocytes and weakly expressed in fibroblasts.

The protein localises to the cell membrane. Its function is as follows. G protein-coupled receptor for peptide hormones apelin (APLN) and apelin receptor early endogenous ligand (APELA), that plays a role in the regulation of normal cardiovascular function and fluid homeostasis. When acting as apelin receptor, activates both G(i) protein pathway that inhibits adenylate cyclase activity, and the beta-arrestin pathway leading to internalization of the receptor. APLNR/APJ receptor is also activated by mechanical strech in a G-protein-independent fashion to induce beta-arrestin signaling leading to cardiac hypertrophy. However, the presence of apelin ligand blunts cardiac hypertrophic induction from APLNR/APJ on response to pathological stimuli. Plays a key role in early development such as gastrulation, blood vessels formation and heart morphogenesis by acting as a receptor for APELA hormone. May promote angioblast migration toward the embryonic midline, i.e. the position of the future vessel formation, during vasculogenesis. Promotes sinus venosus (SV)-derived endothelial cells migration into the developing heart to promote coronary blood vessel development. Also plays a role in various processes in adults such as regulation of blood vessel formation, blood pressure and heart contractility and protection from cardiac hypertrophy and heart failure. This chain is Apelin receptor, found in Mus musculus (Mouse).